We begin with the raw amino-acid sequence, 197 residues long: Small ribosomal subunit protein uS10c (197 aa).

The N-terminal 60 residues, Met1 to Phe60, are a transit peptide targeting the chloroplast. A disordered region spans residues Glu67–Asp91.

Belongs to the universal ribosomal protein uS10 family. Part of the 30S ribosomal subunit.

It is found in the plastid. Its subcellular location is the chloroplast. The sequence is that of Small ribosomal subunit protein uS10c (RPS10) from Mesembryanthemum crystallinum (Common ice plant).